A 395-amino-acid chain; its full sequence is MSLAVNPADNLAALIRCASVTPAEGGALTALEAMLKPMGFSVERPVFHDEDTPDIENLYARKSGNGPHLMFAGHTDVVPPGNEGDWKHPPFSAAIEDGVMYGRGAVDMKGGVACFVAAVARHIEKHGSIKGSVSFLITGDEEGPAINGTVKLLDWAKQRGESWDASIVGEPSNPNALGDAIKIGRRGSLSGTITVHGVQGHAAYPHLAENPVRGITTLVDSLLYPAFDQGTANFQASNLEVTSIDVGNKATNVIANKATASFNIRFNDTWTAETLQAEIIARLEKAARDNRLRPGRETPIKYELTWREHPSHVFLTRDEKLIGTLTDSVEAVTGKRPELSTSGGTSDARFIKDYCPVVEFGLVGQTMHMVDERVALADLEGLTQIYERFIADFFG.

Zn(2+) is bound at residue histidine 74. The active site involves aspartate 76. Aspartate 107 is a binding site for Zn(2+). The active-site Proton acceptor is glutamate 141. Zn(2+)-binding residues include glutamate 142, glutamate 170, and histidine 368.

Belongs to the peptidase M20A family. DapE subfamily. Homodimer. The cofactor is Zn(2+). Co(2+) serves as cofactor.

The catalysed reaction is N-succinyl-(2S,6S)-2,6-diaminopimelate + H2O = (2S,6S)-2,6-diaminopimelate + succinate. The protein operates within amino-acid biosynthesis; L-lysine biosynthesis via DAP pathway; LL-2,6-diaminopimelate from (S)-tetrahydrodipicolinate (succinylase route): step 3/3. Catalyzes the hydrolysis of N-succinyl-L,L-diaminopimelic acid (SDAP), forming succinate and LL-2,6-diaminopimelate (DAP), an intermediate involved in the bacterial biosynthesis of lysine and meso-diaminopimelic acid, an essential component of bacterial cell walls. This Brucella anthropi (strain ATCC 49188 / DSM 6882 / CCUG 24695 / JCM 21032 / LMG 3331 / NBRC 15819 / NCTC 12168 / Alc 37) (Ochrobactrum anthropi) protein is Succinyl-diaminopimelate desuccinylase.